Consider the following 486-residue polypeptide: Coronin-1B (486 aa).

The residue at position 2 (Ser2) is a Phosphoserine; by PKC. 5 WD repeats span residues 80-120, 130-170, 174-213, 217-260, and 265-305; these read GHTG…LTSP, GHTK…ELYR, LHPD…LVAE, AHEG…EPMA, and DSSN…PYIH. The segment at 404 to 444 is disordered; it reads LKVSRRNVLSDSRPTSAARPAAPAPAAPAPAAAASSSLSGA. The segment covering 432–444 has biased composition (low complexity); the sequence is APAAAASSSLSGA. Residues 446–484 are a coiled coil; sequence EAGKLEEVMRELRALRALVKEQGERIGRLEEQLGRVENG.

The protein belongs to the WD repeat coronin family. In terms of assembly, forms homooligomers, but does not form complexes with the other coronins. Interacts with Arp2/3 complex components, including ACTR2, ARPC1B and ARPC2. Binds actin. Phosphorylated in vivo by PKC in response to cholinergic stimulation. Phosphorylation on Ser-2 regulates the interaction with the Arp2/3 complex and cell motility in fibroblasts. Phosphorylation does not seem to affect subcellular location.

Its subcellular location is the cytoplasm. It is found in the cytoskeleton. It localises to the stress fiber. Functionally, regulates leading edge dynamics and cell motility in fibroblasts. May be involved in cytokinesis and signal transduction. The protein is Coronin-1B (CORO1B) of Oryctolagus cuniculus (Rabbit).